We begin with the raw amino-acid sequence, 862 residues long: Axin-1 (862 aa).

The interval 1–78 (MNIQEQGFPL…GYEPEGSASP (78 aa)) is disordered. The Tankyrase-binding motif motif lies at 20 to 29 (APRPPVPGEE). A phosphoserine; by CK1 mark is found at S75 and S77. The RGS domain occupies 88–211 (SLHSLLDDQD…LKSDIYLEYT (124 aa)). Residues 209–338 (EYTRTGSESP…DADTLSLTDS (130 aa)) are interaction with TP53. Disordered stretches follow at residues 215 to 289 (SESP…YSEG) and 316 to 344 (TSANDSEQQSLSSDADTLSLTDSSVDGIP). Residue S217 is modified to Phosphoserine; by CK1. The segment covering 242 to 258 (NEDEEWKCDQDMDEDDG) has biased composition (acidic residues). Residues 325–339 (SLSSDADTLSLTDSS) are compositionally biased toward low complexity. The interaction with GSK3B stretch occupies residues 348-433 (IRKQHRREMQ…DGDPSSGPPG (86 aa)). The segment at 353 to 411 (RREMQESVQVNGRVPLPHIPRTYRVPKEVRVEPQKFAEELIHRLEAVQRTREAEEKLEE) is interaction with SIAH1 and SIAH2. Positions 413–441 (LKRVRMEEEGEDGDPSSGPPGPCHKLPPA) are disordered. The segment covering 429–441 (SGPPGPCHKLPPA) has biased composition (pro residues). Positions 434 to 502 (PCHKLPPAPA…SPDSGHVAKM (69 aa)) are interaction with CTNNB1. S469 bears the Phosphoserine; by CK1 mark. The disordered stretch occupies residues 480 to 500 (RTPGRQSPGPGHRSPDSGHVA). Phosphothreonine; by GSK3-beta is present on T481. 3 positions are modified to phosphoserine: S486, S493, and S511. The interval 507–757 (GGAASGHGKH…PVLHVVPAVS (251 aa)) is interaction with RNF111. Residues 531–544 (HHRHVHHHVHHSTA) show a composition bias toward basic residues. Disordered stretches follow at residues 531–629 (HHRH…AEKN) and 641–679 (KEISRHRRTGHGSSGTRKPQPHENSRPLSLEHPWAGPQL). Positions 545–556 (RPKEQVEAEATR) are enriched in basic and acidic residues. The interval 575–789 (SRGYSESVGA…CDSIVVAYYF (215 aa)) is interaction with PPP2CA. The residue at position 581 (S581) is a Phosphoserine. Positions 677-752 (PQLRTSVQPS…RPACAPVLHV (76 aa)) are interaction with HIPK2. One can recognise a DIX domain in the interval 780–862 (CDSIVVAYYF…KIIGKVEKVD (83 aa)). Glycyl lysine isopeptide (Lys-Gly) (interchain with G-Cter in SUMO) cross-links involve residues K857 and K860.

Homodimer. Interacts with ZBED3; the interaction is direct, enhanced by protein kinase GSK3B and casein kinase CSNK1E activities and decreases GSK3B-induced beta-catenin serine and threonine phosphorylations. Component of the beta-catenin destruction complex, containing at least, CTNNB1, an axin and GSK3B, that regulates CTNNB1 protein levels through phosphorylation and ubiquitination. Interacts with CTNNB1 (via the armadillo repeats 2-7). Interacts with GSK3B; the interaction hyperphosphorylates CTNNB1 leading to its ubiquitination and destruction. Component of the AXIN1-HIPK2-TP53 complex. Interacts directly in the complex with TP53 and HIPK2. Interacts with DAXX; the interaction stimulates the interaction of DAXX with TP53, stimulates 'Ser-46' phosphorylation of TP53 and induces cell death on UV irradiation. Also binds APC, SMAD6, SMAD7 and RNF111. Interacts with DIXDC1; prevents interaction with MAP3K1. Interacts with MAP3K4. Interacts with ANKRD6 and AIDA. Interacts with MDFI; the interaction decreases AXIN1-mediated JUN N-terminal kinase (JNK) activation. Interacts with MDFIC; the interaction inhibits beta-cateninin-mediated signaling and AXIN1-mediated JUN N-terminal kinase (JNK) activation. Interacts with LRP5 (via its phosphorylated PPPSP motifs); the interaction is stimulated by WNT1 and GSK3B and activates beta-catenin signaling. Interacts (via the C-terminal) with PPP1CA; the interaction dephosphorylates AXIN1 and regulates interaction with GSK3B. Interacts with PPP2CA; the interaction dephosphorylates AXIN1. Interacts with MACF1. Found in a complex composed of MACF1, APC, AXIN1, CTNNB1 and GSK3B. Interacts with TNKS. Interacts with DAB2; the interaction is mutually exclusive with the AXIN1:PPP1CA interaction. Interacts with WDR26. Interacts with GID8. Interacts with SIAH1 and SIAH2; both probably catalyze AXIN1 ubiquitination and subsequent proteasome-mediated ubiquitin-dependent degradation. Interaction with GSK3B and AXIN1 is competitive. Post-translationally, phosphorylation and dephosphorylation of AXIN1 regulates assembly and function of the beta-catenin complex. Phosphorylated by CK1 and GSK3B. Dephosphorylated by PPP1CA and PPP2CA. Phosphorylation by CK1 enhances binding of GSK3B to AXIN1. In terms of processing, ADP-ribosylated by tankyrase TNKS and TNKS2. Poly-ADP-ribosylated protein is recognized by RNF146, followed by ubiquitination at 'Lys-48' and subsequent activation of the Wnt signaling pathway. Ubiquitinated by RNF146 when poly-ADP-ribosylated, leading to its degradation and subsequent activation of the Wnt signaling pathway. Sumoylation at Lys-857 and Lys-860 prevents ubiquitination and degradation. Sumoylation is required for AXIN1-mediated JNK activation. Deubiquitinated by USP34, deubiquitinated downstream of beta-catenin stabilization step: deubiquitination is important for nuclear accumulation during Wnt signaling to positively regulate beta-catenin (CTNBB1)-mediated transcription. Ubiquitination by SIAH1 and SIAH2 induces its proteasomal degradation as part of the activation of the Wnt signaling pathway. As to expression, ubiquitously expressed.

It localises to the cytoplasm. The protein resides in the nucleus. Its subcellular location is the membrane. It is found in the cell membrane. Component of the beta-catenin destruction complex required for regulating CTNNB1 levels through phosphorylation and ubiquitination, and modulating Wnt-signaling. Controls dorsoventral patterning via two opposing effects; down-regulates CTNNB1 to inhibit the Wnt signaling pathway and ventralize embryos, but also dorsalizes embryos by activating a Wnt-independent JNK signaling pathway. In Wnt signaling, probably facilitates the phosphorylation of CTNNB1 and APC by GSK3B. Likely to function as a tumor suppressor. Enhances TGF-beta signaling by recruiting the RNF111 E3 ubiquitin ligase and promoting the degradation of inhibitory SMAD7. Also a component of the AXIN1-HIPK2-TP53 complex which controls cell growth, apoptosis and development. Facilitates the phosphorylation of TP53 by HIPK2 upon ultraviolet irradiation. In Homo sapiens (Human), this protein is Axin-1 (AXIN1).